We begin with the raw amino-acid sequence, 494 residues long: Glutamate--tRNA ligase (494 aa).

The 'HIGH' region signature appears at 15–25 (PSPTGNPHVGL). Zn(2+)-binding residues include Cys112, Cys114, Cys139, and Glu141. Residues 260–264 (KLSKR) carry the 'KMSKS' region motif. ATP is bound at residue Lys263.

Belongs to the class-I aminoacyl-tRNA synthetase family. Glutamate--tRNA ligase type 1 subfamily. As to quaternary structure, monomer. The cofactor is Zn(2+).

The protein resides in the cytoplasm. It catalyses the reaction tRNA(Glu) + L-glutamate + ATP = L-glutamyl-tRNA(Glu) + AMP + diphosphate. In terms of biological role, catalyzes the attachment of glutamate to tRNA(Glu) in a two-step reaction: glutamate is first activated by ATP to form Glu-AMP and then transferred to the acceptor end of tRNA(Glu). This chain is Glutamate--tRNA ligase, found in Streptomyces coelicolor (strain ATCC BAA-471 / A3(2) / M145).